The primary structure comprises 144 residues: MKKWLETLPPEWKKFRYRGYTLEELLAMPMDQFIKLLPARQRRSLLRGLTDAQRRLLWKIRKARQKMLQGKKVVVKTHVRDMIILPEMVGLTIAVYNGKEFIPVKITPEMIGHYLGEFSPTCKQVQHGEPGLKATRSTLHVALK.

This sequence belongs to the universal ribosomal protein uS19 family.

Its function is as follows. Protein S19 forms a complex with S13 that binds strongly to the 16S ribosomal RNA. The polypeptide is Small ribosomal subunit protein uS19 (Hyperthermus butylicus (strain DSM 5456 / JCM 9403 / PLM1-5)).